The primary structure comprises 129 residues: Small ribosomal subunit protein uS11 (129 aa).

Belongs to the universal ribosomal protein uS11 family. In terms of assembly, part of the 30S ribosomal subunit. Interacts with proteins S7 and S18. Binds to IF-3.

In terms of biological role, located on the platform of the 30S subunit, it bridges several disparate RNA helices of the 16S rRNA. Forms part of the Shine-Dalgarno cleft in the 70S ribosome. The chain is Small ribosomal subunit protein uS11 from Hahella chejuensis (strain KCTC 2396).